The sequence spans 494 residues: Ubiquitin carboxyl-terminal hydrolase 14 (494 aa).

The 77-residue stretch at 4 to 80 (YSVTVKWGKE…MMGSADALPE (77 aa)) folds into the Ubiquitin-like domain. At Thr52 the chain carries Phosphothreonine. The region spanning 105–483 (CGLTNLGNTC…IAYVLLYGPR (379 aa)) is the USP domain. Cys114 serves as the catalytic Nucleophile. Ser143 and Ser148 each carry phosphoserine. Thr235 is subject to Phosphothreonine. Ser237, Ser302, and Ser432 each carry phosphoserine. His435 (proton acceptor) is an active-site residue. Lys449 bears the N6-acetyllysine mark.

Belongs to the peptidase C19 family. USP14/UBP6 subfamily. As to quaternary structure, homodimer (Potential). Associates with the 26S proteasome. Interacts with FANCC, CXCR4 and ERN1. Interacts with TRIM14; this interaction recruits USP14 to cleave ubiquitin chains of CGAS.

It is found in the cytoplasm. The protein localises to the cell membrane. It carries out the reaction Thiol-dependent hydrolysis of ester, thioester, amide, peptide and isopeptide bonds formed by the C-terminal Gly of ubiquitin (a 76-residue protein attached to proteins as an intracellular targeting signal).. Functionally, proteasome-associated deubiquitinase which releases ubiquitin from the proteasome targeted ubiquitinated proteins. Ensures the regeneration of ubiquitin at the proteasome. Is a reversibly associated subunit of the proteasome and a large fraction of proteasome-free protein exists within the cell. Required for the degradation of the chemokine receptor CXCR4 which is critical for CXCL12-induced cell chemotaxis. Also serves as a physiological inhibitor of endoplasmic reticulum-associated degradation (ERAD) under the non-stressed condition by inhibiting the degradation of unfolded endoplasmic reticulum proteins via interaction with ERN1. Indispensable for synaptic development and function at neuromuscular junctions (NMJs). Plays a role in the innate immune defense against viruses by stabilizing the viral DNA sensor CGAS and thus inhibiting its autophagic degradation. The polypeptide is Ubiquitin carboxyl-terminal hydrolase 14 (USP14) (Bos taurus (Bovine)).